Reading from the N-terminus, the 473-residue chain is Flavin-dependent L-tryptophan oxidase RebO (473 aa).

The signal sequence occupies residues 1–21 (MSRGHKKITVLGAGVAGLVAA). FAD is bound by residues 15–16 (VA), 35–36 (EG), Arg43, 61–64 (GAMR), Glu444, and 451–456 (AWIDGA).

This sequence belongs to the flavin monoamine oxidase family. RebO subfamily. Homodimer. It depends on FAD as a cofactor.

It catalyses the reaction 7-chloro-L-tryptophan + O2 = 3-(7-chloroindol-3-yl)-2-iminopropanoate + H2O2. It carries out the reaction L-tryptophan + O2 = 2-iminio-3-(indol-3-yl)propanoate + H2O2. In terms of biological role, involved in the biosynthesis of the indolocarbazole antitumor agent rebeccamycin. It generates the imine form of 7-chloroindole 3-pyruvate (7Cl-IPA) from 7-chloro-L-tryptophan (7Cl-Trp), with concomitant two-electron reduction of O(2) to H(2)O(2). The enzyme is also active with L-tryptophan as substrate. The protein is Flavin-dependent L-tryptophan oxidase RebO (rebO) of Lentzea aerocolonigenes (Lechevalieria aerocolonigenes).